The primary structure comprises 206 residues: Testis-expressed protein 38 (206 aa).

A helical transmembrane segment spans residues 15–35; the sequence is VSLYFGILGLCSVITGGCIIF.

It is found in the membrane. The sequence is that of Testis-expressed protein 38 (TEX38) from Homo sapiens (Human).